Consider the following 216-residue polypeptide: Enolase-phosphatase E1 (216 aa).

Residues Asp8 and Glu10 each contribute to the Mg(2+) site. Substrate-binding positions include 115–116 (SS) and Lys149. Mg(2+) is bound at residue Asp172.

Belongs to the HAD-like hydrolase superfamily. MasA/MtnC family. Monomer. It depends on Mg(2+) as a cofactor.

The protein localises to the cytoplasm. Its subcellular location is the nucleus. The catalysed reaction is 5-methylsulfanyl-2,3-dioxopentyl phosphate + H2O = 1,2-dihydroxy-5-(methylsulfanyl)pent-1-en-3-one + phosphate. The protein operates within amino-acid biosynthesis; L-methionine biosynthesis via salvage pathway; L-methionine from S-methyl-5-thio-alpha-D-ribose 1-phosphate: step 3/6. It participates in amino-acid biosynthesis; L-methionine biosynthesis via salvage pathway; L-methionine from S-methyl-5-thio-alpha-D-ribose 1-phosphate: step 4/6. Functionally, bifunctional enzyme that catalyzes the enolization of 2,3-diketo-5-methylthiopentyl-1-phosphate (DK-MTP-1-P) into the intermediate 2-hydroxy-3-keto-5-methylthiopentenyl-1-phosphate (HK-MTPenyl-1-P), which is then dephosphorylated to form the acireductone 1,2-dihydroxy-3-keto-5-methylthiopentene (DHK-MTPene). The protein is Enolase-phosphatase E1 (utr4) of Schizosaccharomyces pombe (strain 972 / ATCC 24843) (Fission yeast).